The following is a 312-amino-acid chain: HTH-type transcriptional regulator TdcA (312 aa).

The HTH lysR-type domain maps to Pro-7–Thr-64. Residues Ile-24–Asn-43 constitute a DNA-binding region (H-T-H motif).

It belongs to the LysR transcriptional regulatory family.

The protein operates within amino-acid degradation; L-threonine degradation via propanoate pathway [regulation]. Transcriptional activator for the tdcABCDE operon. This chain is HTH-type transcriptional regulator TdcA (tdcA), found in Escherichia coli O157:H7.